The sequence spans 583 residues: Lamin-B3 (583 aa).

Positions 1–30 (MATSTPSRAREHASAAQSPGSPTRISRMQE) are disordered. Residues 2-32 (ATSTPSRAREHASAAQSPGSPTRISRMQEKE) are head. Residues 15-26 (AAQSPGSPTRIS) show a composition bias toward polar residues. Ser21 is modified (phosphoserine). The IF rod domain maps to 30-386 (EKEDLRHLND…KMLEGEEQRL (357 aa)). The segment at 33 to 67 (DLRHLNDRLAAYIERVRSLEADKSLLKIQLEEREE) is coil 1A. The interval 68–79 (VSSREVTNLRQL) is linker 1. The interval 80-215 (YETELADARK…QKNIHTQEVK (136 aa)) is coil 1B. The linker 2 stretch occupies residues 216-242 (EIKKRHDTRIVEIDSGRRVEFESKLAE). Positions 243-384 (ALQELRRDHE…YRKMLEGEEQ (142 aa)) are coil 2. The disordered stretch occupies residues 383–431 (EQRLKLSPSPSQRSTVSRASTSQTSRLLRGKKRKLDETGRSVTKRSYKV). The segment at 385–580 (RLKLSPSPSQ…QSHQSVDPSC (196 aa)) is tail. Polar residues predominate over residues 390-408 (PSPSQRSTVSRASTSQTSR). Ser391 carries the phosphoserine modification. In terms of domain architecture, LTD spans 429–546 (YKVVQQASST…EECAERTLYR (118 aa)). Cys580 carries the post-translational modification Cysteine methyl ester. Cys580 carries the S-farnesyl cysteine lipid modification. A propeptide spans 581–583 (SIM) (removed in mature form).

Belongs to the intermediate filament family. Phosphorylation plays a key role in lamin organization, subcellular localization and nuclear envelope disintegration. Phosphorylation by CDK1 at Ser-21 at the onset of mitosis drives lamin disassembly and nuclear envelope breakdown.

It is found in the nucleus lamina. It localises to the nucleus envelope. The protein localises to the nucleus. The protein resides in the nucleoplasm. Its subcellular location is the nucleus matrix. Its function is as follows. Lamins are intermediate filament proteins that assemble into a filamentous meshwork, and which constitute the major components of the nuclear lamina, a fibrous layer on the nucleoplasmic side of the inner nuclear membrane. Lamins provide a framework for the nuclear envelope, bridging the nuclear envelope and chromatin, thereby playing an important role in nuclear assembly, chromatin organization, nuclear membrane and telomere dynamics. The structural integrity of the lamina is strictly controlled by the cell cycle, as seen by the disintegration and formation of the nuclear envelope in prophase and telophase, respectively. The protein is Lamin-B3 (lmnb3.L) of Xenopus laevis (African clawed frog).